Here is a 311-residue protein sequence, read N- to C-terminus: MHPQVASLFDNVYEDLAAATLEFIGTAFFLLFGLGGIQASTAEDTASSQPPASGIEHVLYISTCMGFSLVVSAWLFFRVTGGLFNPNISFALLLVGGLKPLRFVLFCIAQLTGAIAGAAIVRGLTSAPLSVNNVLQQGTSAAQGVFIEMFITAALVLSVLMLAAEKHEATPFAPVGIGLTLFACHLFAVYYTGAAMNSARAFGPAVISGFPEPQHWVYWVGPFLGSLLGAGFYATLKHYKYWRLNPDQATSDYRKSPSDPVALLKSTAETFINVGDEETRNGCASNEEGVRATGDEKSSNATSSRTNFSPV.

At 1–16 the chain is on the cytoplasmic side; that stretch reads MHPQVASLFDNVYEDL. Residues 17 to 37 form a helical membrane-spanning segment; the sequence is AAATLEFIGTAFFLLFGLGGI. The Extracellular portion of the chain corresponds to 38-56; sequence QASTAEDTASSQPPASGIE. Residues 57 to 77 traverse the membrane as a helical segment; it reads HVLYISTCMGFSLVVSAWLFF. A topological domain (cytoplasmic) is located at residue R78. The helical transmembrane segment at 79-99 threads the bilayer; it reads VTGGLFNPNISFALLLVGGLK. Positions 85 to 87 match the NPA 1 motif; the sequence is NPN. P100 is a topological domain (extracellular). Residues 101–121 form a helical membrane-spanning segment; that stretch reads LRFVLFCIAQLTGAIAGAAIV. Residues 122–143 lie on the Cytoplasmic side of the membrane; the sequence is RGLTSAPLSVNNVLQQGTSAAQ. Residues 144–164 form a helical membrane-spanning segment; that stretch reads GVFIEMFITAALVLSVLMLAA. The Extracellular segment spans residues 165-168; that stretch reads EKHE. The chain crosses the membrane as a helical span at residues 169–189; sequence ATPFAPVGIGLTLFACHLFAV. Residues 190-215 are Cytoplasmic-facing; it reads YYTGAAMNSARAFGPAVISGFPEPQH. The short motif at 197-199 is the NPA 2 element; that stretch reads NSA. A helical membrane pass occupies residues 216 to 236; the sequence is WVYWVGPFLGSLLGAGFYATL. Residues 237–311 are Extracellular-facing; sequence KHYKYWRLNP…TSSRTNFSPV (75 aa). A disordered region spans residues 276-311; the sequence is DEETRNGCASNEEGVRATGDEKSSNATSSRTNFSPV. Residues 288 to 298 show a composition bias toward basic and acidic residues; sequence EGVRATGDEKS. Residues 299–311 show a composition bias toward polar residues; it reads SNATSSRTNFSPV. N300 carries an N-linked (GlcNAc...) asparagine glycan.

Belongs to the MIP/aquaporin (TC 1.A.8) family.

Its subcellular location is the cell membrane. The catalysed reaction is H2O(in) = H2O(out). It carries out the reaction H2O2(out) = H2O2(in). It catalyses the reaction nitric oxide(out) = nitric oxide(in). The enzyme catalyses CO2(out) = CO2(in). Its function is as follows. Water channel required to facilitate the transport of water across membranes. Also mediates the transport nitric oxide, hydrogen peroxide and carbon dioxide across the membrane. Required for Hartig net development in trembling aspen trees. Contributes in fungal cellular processes during the basidiocarp formation. This chain is Aquaporin-1, found in Laccaria bicolor (Bicoloured deceiver).